We begin with the raw amino-acid sequence, 790 residues long: Lon protease (790 aa).

Residues 23-220 form the Lon N-terminal domain; sequence LPIMPIFHTV…EITLIVNHQL (198 aa). Residue 372 to 379 coordinates ATP; that stretch reads GPPGTGKT. In terms of domain architecture, Lon proteolytic spans 608-789; that stretch reads ISKPGIAMGL…REVLNIALSR (182 aa). Catalysis depends on residues Ser-695 and Lys-738.

The protein belongs to the peptidase S16 family. As to quaternary structure, homohexamer. Organized in a ring with a central cavity.

The protein localises to the cytoplasm. The catalysed reaction is Hydrolysis of proteins in presence of ATP.. In terms of biological role, ATP-dependent serine protease that mediates the selective degradation of mutant and abnormal proteins as well as certain short-lived regulatory proteins. Required for cellular homeostasis and for survival from DNA damage and developmental changes induced by stress. Degrades polypeptides processively to yield small peptide fragments that are 5 to 10 amino acids long. Binds to DNA in a double-stranded, site-specific manner. This is Lon protease from Syntrophus aciditrophicus (strain SB).